The following is a 3461-amino-acid chain: Reelin (3461 aa).

Residues Met-1–Ala-26 form the signal peptide. One can recognise a Reelin domain in the interval Ala-27–Ser-191. A disulfide bond links Cys-41 and Cys-127. Asn-141 is a glycosylation site (N-linked (GlcNAc...) asparagine). Cys-155 and Cys-179 are oxidised to a cystine. N-linked (GlcNAc...) asparagine glycans are attached at residues Asn-258, Asn-290, and Asn-306. An intrachain disulfide couples Cys-540 to Cys-581. The stretch at Glu-593–Leu-604 is one BNR 1 repeat. An intrachain disulfide couples Cys-609 to Cys-614. N-linked (GlcNAc...) asparagine glycosylation is present at Asn-629. Positions Ile-671–Glu-702 constitute an EGF-like 1 domain. Cystine bridges form between Cys-675/Cys-685 and Cys-692/Cys-701. One copy of the BNR 2 repeat lies at His-799 to Leu-810. Residues Cys-895 and Cys-937 are joined by a disulfide bond. The stretch at Glu-952 to Leu-963 is one BNR 3 repeat. 3 disulfides stabilise this stretch: Cys-968–Cys-975, Cys-1034–Cys-1044, and Cys-1051–Cys-1060. The EGF-like 2 domain maps to Ile-1030–His-1061. Residues Gln-1157–Leu-1168 form a BNR 4 repeat. Residue Asn-1267 is glycosylated (N-linked (GlcNAc...) asparagine). One copy of the BNR 5 repeat lies at Gln-1323–Leu-1334. 4 disulfide bridges follow: Cys-1339-Cys-1348, Cys-1413-Cys-1423, Cys-1417-Cys-1428, and Cys-1430-Cys-1441. The EGF-like 3 domain maps to Ile-1409–Val-1442. A glycan (N-linked (GlcNAc...) asparagine) is linked at Asn-1447. Cys-1475 and Cys-1522 are disulfide-bonded. A BNR 6 repeat occupies Gln-1535 to Leu-1546. N-linked (GlcNAc...) asparagine glycosylation is present at Asn-1600. Cys-1633 and Cys-1673 are oxidised to a cystine. The BNR 7 repeat unit spans residues Gln-1686–Leu-1697. Cys-1702 and Cys-1709 form a disulfide bridge. Residue Asn-1750 is glycosylated (N-linked (GlcNAc...) asparagine). The EGF-like 4 domain occupies Leu-1765–Val-1796. The BNR 8 repeat unit spans residues Gln-1884–Leu-1895. N-linked (GlcNAc...) asparagine glycosylation is present at Asn-1921. A disulfide bridge connects residues Cys-1983 and Cys-2030. Residues Glu-2043 to Leu-2054 form a BNR 9 repeat. The cysteines at positions 2059 and 2070 are disulfide-linked. Residues His-2061 and His-2074 each coordinate Zn(2+). The EGF-like 5 domain occupies Ile-2129–Lys-2161. Intrachain disulfides connect Cys-2133–Cys-2143, Cys-2137–Cys-2149, and Cys-2151–Cys-2160. The N-linked (GlcNAc...) asparagine glycan is linked to Asn-2145. Glu-2179 is a Zn(2+) binding site. The cysteines at positions 2195 and 2235 are disulfide-linked. The BNR 10 repeat unit spans residues Gln-2250–Leu-2261. Glu-2264 contacts Zn(2+). Residues Asn-2269 and Asn-2317 are each glycosylated (N-linked (GlcNAc...) asparagine). 6 disulfides stabilise this stretch: Cys-2348/Cys-2387, Cys-2393/Cys-2559, Cys-2482/Cys-2492, Cys-2486/Cys-2497, Cys-2499/Cys-2508, and Cys-2544/Cys-2584. Residues Glu-2397, Glu-2399, and His-2460 each coordinate Zn(2+). One copy of the BNR 11 repeat lies at Glu-2399–Pro-2410. The EGF-like 6 domain occupies Ile-2478–Asp-2509. An N-linked (GlcNAc...) asparagine glycan is attached at Asn-2569. 2 BNR repeats span residues Glu-2598–Leu-2609 and Gln-2778–Tyr-2789. An intrachain disulfide couples Cys-2794 to Cys-2801. In terms of domain architecture, EGF-like 7 spans Leu-2853–Tyr-2884. Cysteines 2919 and 2966 form a disulfide. The N-linked (GlcNAc...) asparagine glycan is linked to Asn-2962. One copy of the BNR 14 repeat lies at Asp-2979–Leu-2990. N-linked (GlcNAc...) asparagine glycans are attached at residues Asn-3016 and Asn-3073. The stretch at Glu-3143–Leu-3155 is one BNR 15 repeat. The cysteines at positions 3160 and 3170 are disulfide-linked. A glycan (N-linked (GlcNAc...) asparagine) is linked at Asn-3185. One can recognise an EGF-like 8 domain in the interval Ile-3228–Ser-3260. 4 disulfide bridges follow: Cys-3232–Cys-3242, Cys-3236–Cys-3248, Cys-3250–Cys-3259, and Cys-3296–Cys-3346. The BNR 16 repeat unit spans residues Gln-3363–Val-3374. 2 N-linked (GlcNAc...) asparagine glycosylation sites follow: Asn-3412 and Asn-3439.

It belongs to the reelin family. In terms of assembly, oligomer of disulfide-linked homodimers. Post-translationally, N-glycosylated and to a lesser extent also O-glycosylated. As to expression, the major isoform 1 is neuron-specific. It is abundantly produced during brain ontogenesis by the Cajal-Retzius cells and other pioneer neurons located in the telencephalic marginal zone and by granule cells of the external granular layer of the cerebellum. Expression is located in deeper layers in the developing hippocampus and olfactory bulb, low levels of expression are also detected in the immature striatum. At early developmental stages, expressed also in hypothalamic differentiation fields, tectum and spinal cord. A moderate to low level of expression occurs in the septal area, striatal fields, habenular nuclei, some thalamic nuclei, particularly the lateral geniculate, the retina and some nuclei of the reticular formation in the central field of the medulla. Very low levels found in liver and kidney. No expression in radial glial cells, cortical plate, Purkinje cells and inferior olivary neurons. The minor isoform 2 is only expressed in non neuronal cells. The minor isoform 3 is found in the same cells as isoform 1, but is almost undetectable in retina and brain stem.

Its subcellular location is the secreted. The protein localises to the extracellular space. It localises to the extracellular matrix. Its function is as follows. Extracellular matrix serine protease secreted by pioneer neurons that plays a role in layering of neurons in the cerebral cortex and cerebellum by coordinating cell positioning during neurodevelopment. Regulates microtubule function in neurons and neuronal migration. Binding to the extracellular domains of lipoprotein receptors VLDLR and LRP8/APOER2 induces tyrosine phosphorylation of DAB1 and modulation of TAU phosphorylation. Affects migration of sympathetic preganglionic neurons in the spinal cord, where it seems to act as a barrier to neuronal migration. Enzymatic activity is important for the modulation of cell adhesion. This chain is Reelin (Reln), found in Mus musculus (Mouse).